The sequence spans 301 residues: Diaminopimelate epimerase (301 aa).

Substrate is bound by residues asparagine 15, glutamine 47, and asparagine 67. Catalysis depends on cysteine 76, which acts as the Proton donor. Residues 77–78 (GN), asparagine 163, asparagine 197, and 215–216 (ER) each bind substrate. The Proton acceptor role is filled by cysteine 224. Substrate is bound at residue 225-226 (GS).

Belongs to the diaminopimelate epimerase family. In terms of assembly, homodimer.

It localises to the cytoplasm. The enzyme catalyses (2S,6S)-2,6-diaminopimelate = meso-2,6-diaminopimelate. It participates in amino-acid biosynthesis; L-lysine biosynthesis via DAP pathway; DL-2,6-diaminopimelate from LL-2,6-diaminopimelate: step 1/1. Its function is as follows. Catalyzes the stereoinversion of LL-2,6-diaminopimelate (L,L-DAP) to meso-diaminopimelate (meso-DAP), a precursor of L-lysine and an essential component of the bacterial peptidoglycan. This Rhizobium etli (strain ATCC 51251 / DSM 11541 / JCM 21823 / NBRC 15573 / CFN 42) protein is Diaminopimelate epimerase.